A 250-amino-acid chain; its full sequence is Eukaryotic translation initiation factor 3 subunit K (250 aa).

A PCI domain is found at 54–235; the sequence is YDLFGNLAIL…DVKAGVVKEN (182 aa).

It belongs to the eIF-3 subunit K family. In terms of assembly, component of the eukaryotic translation initiation factor 3 (eIF-3) complex.

The protein localises to the cytoplasm. In terms of biological role, component of the eukaryotic translation initiation factor 3 (eIF-3) complex, which is involved in protein synthesis of a specialized repertoire of mRNAs and, together with other initiation factors, stimulates binding of mRNA and methionyl-tRNAi to the 40S ribosome. The eIF-3 complex specifically targets and initiates translation of a subset of mRNAs involved in cell proliferation. This chain is Eukaryotic translation initiation factor 3 subunit K, found in Cryptococcus neoformans var. neoformans serotype D (strain B-3501A) (Filobasidiella neoformans).